The chain runs to 368 residues: C-glycoside deglycosidase alpha subunit (368 aa).

Glu145 is a binding site for a divalent metal cation. His147 (proton acceptor) is an active-site residue. Residues Asp177, His275, and Glu311 each contribute to the a divalent metal cation site.

The protein belongs to the C-glycoside deglycosidase alpha subunit family. Heterodimer composed of an alpha subunit (CarB) and a beta subunit (CarC). It depends on a divalent metal cation as a cofactor.

It carries out the reaction 3''-dehydroisovitexin = 1,5-anhydro-D-erythro-hex-1-en-3-ulose + apigenin. The catalysed reaction is 3''-dehydroisoorientin = 1,5-anhydro-D-erythro-hex-1-en-3-ulose + luteolin. In terms of biological role, carbon-carbon bond-cleaving enzyme which participates in the metabolism of C-glycosides. Acts on the C6-glycosylated compounds 3''-dehydroisovitexin (3''-oxo-isovitexin) and 3''-dehydroisoorientin (3''-oxo-homoorientin). Shows weak activity with 3'-dehydromangiferin (3'-oxo-mangiferin). The protein is C-glycoside deglycosidase alpha subunit of Microbacterium trichothecenolyticum (Aureobacterium trichothecenolyticum).